Reading from the N-terminus, the 370-residue chain is tRNA 2-selenouridine synthase (370 aa).

Residues Phe-12–Gln-136 form the Rhodanese domain. Cys-95 serves as the catalytic S-selanylcysteine intermediate.

This sequence belongs to the SelU family. Monomer.

The catalysed reaction is 5-methylaminomethyl-2-thiouridine(34) in tRNA + selenophosphate + (2E)-geranyl diphosphate + H2O + H(+) = 5-methylaminomethyl-2-selenouridine(34) in tRNA + (2E)-thiogeraniol + phosphate + diphosphate. It carries out the reaction 5-methylaminomethyl-2-thiouridine(34) in tRNA + (2E)-geranyl diphosphate = 5-methylaminomethyl-S-(2E)-geranyl-thiouridine(34) in tRNA + diphosphate. It catalyses the reaction 5-methylaminomethyl-S-(2E)-geranyl-thiouridine(34) in tRNA + selenophosphate + H(+) = 5-methylaminomethyl-2-(Se-phospho)selenouridine(34) in tRNA + (2E)-thiogeraniol. The enzyme catalyses 5-methylaminomethyl-2-(Se-phospho)selenouridine(34) in tRNA + H2O = 5-methylaminomethyl-2-selenouridine(34) in tRNA + phosphate. Involved in the post-transcriptional modification of the uridine at the wobble position (U34) of tRNA(Lys), tRNA(Glu) and tRNA(Gln). Catalyzes the conversion of 2-thiouridine (S2U-RNA) to 2-selenouridine (Se2U-RNA). Acts in a two-step process involving geranylation of 2-thiouridine (S2U) to S-geranyl-2-thiouridine (geS2U) and subsequent selenation of the latter derivative to 2-selenouridine (Se2U) in the tRNA chain. In Pseudomonas putida (strain ATCC 47054 / DSM 6125 / CFBP 8728 / NCIMB 11950 / KT2440), this protein is tRNA 2-selenouridine synthase.